Consider the following 443-residue polypeptide: D-inositol 3-phosphate glycosyltransferase (443 aa).

Position 26 (H26) interacts with 1D-myo-inositol 3-phosphate. Residues 32 to 33 (QP) and G40 each bind UDP-N-acetyl-alpha-D-glucosamine. 1D-myo-inositol 3-phosphate-binding positions include 37–42 (DAGGMN), K95, Y128, T152, and R172. 3 residues coordinate UDP-N-acetyl-alpha-D-glucosamine: R246, K251, and Q304. Mg(2+) contacts are provided by Y313, R314, and A316. Residues E326 and E334 each contribute to the UDP-N-acetyl-alpha-D-glucosamine site. Residue T340 participates in Mg(2+) binding.

This sequence belongs to the glycosyltransferase group 1 family. MshA subfamily. As to quaternary structure, homodimer.

It catalyses the reaction 1D-myo-inositol 3-phosphate + UDP-N-acetyl-alpha-D-glucosamine = 1D-myo-inositol 2-acetamido-2-deoxy-alpha-D-glucopyranoside 3-phosphate + UDP + H(+). Catalyzes the transfer of a N-acetyl-glucosamine moiety to 1D-myo-inositol 3-phosphate to produce 1D-myo-inositol 2-acetamido-2-deoxy-glucopyranoside 3-phosphate in the mycothiol biosynthesis pathway. The protein is D-inositol 3-phosphate glycosyltransferase of Mycobacteroides abscessus (strain ATCC 19977 / DSM 44196 / CCUG 20993 / CIP 104536 / JCM 13569 / NCTC 13031 / TMC 1543 / L948) (Mycobacterium abscessus).